The sequence spans 395 residues: Succinyl-diaminopimelate desuccinylase (395 aa).

His74 contacts Zn(2+). Asp76 is a catalytic residue. A Zn(2+)-binding site is contributed by Asp107. Residue Glu141 is the Proton acceptor of the active site. Glu142, Glu170, and His368 together coordinate Zn(2+).

The protein belongs to the peptidase M20A family. DapE subfamily. As to quaternary structure, homodimer. Zn(2+) is required as a cofactor. It depends on Co(2+) as a cofactor.

It carries out the reaction N-succinyl-(2S,6S)-2,6-diaminopimelate + H2O = (2S,6S)-2,6-diaminopimelate + succinate. Its pathway is amino-acid biosynthesis; L-lysine biosynthesis via DAP pathway; LL-2,6-diaminopimelate from (S)-tetrahydrodipicolinate (succinylase route): step 3/3. Functionally, catalyzes the hydrolysis of N-succinyl-L,L-diaminopimelic acid (SDAP), forming succinate and LL-2,6-diaminopimelate (DAP), an intermediate involved in the bacterial biosynthesis of lysine and meso-diaminopimelic acid, an essential component of bacterial cell walls. This is Succinyl-diaminopimelate desuccinylase from Brucella canis (strain ATCC 23365 / NCTC 10854 / RM-666).